The sequence spans 467 residues: Citrate synthase, mitochondrial (467 aa).

Active-site residues include His301 and His347.

This sequence belongs to the citrate synthase family.

It is found in the mitochondrion matrix. It carries out the reaction oxaloacetate + acetyl-CoA + H2O = citrate + CoA + H(+). The protein operates within carbohydrate metabolism; tricarboxylic acid cycle; isocitrate from oxaloacetate: step 1/2. This chain is Citrate synthase, mitochondrial (CIT), found in Candida tropicalis (Yeast).